The sequence spans 270 residues: Fibroblast growth factor 5 (270 aa).

An N-terminal signal peptide occupies residues Met-1–Ala-20. The segment at Leu-26–Trp-83 is disordered. A compositionally biased stretch (low complexity) spans Gly-43 to Ser-68. Polar residues predominate over residues Leu-69–Trp-83. An N-linked (GlcNAc...) asparagine glycan is attached at Asn-112. The interval Pro-236–Ser-257 is disordered.

Belongs to the heparin-binding growth factors family. In terms of assembly, interacts with FGFR1 and FGFR2. Affinity between fibroblast growth factors (FGFs) and their receptors is increased by heparan sulfate glycosaminoglycans that function as coreceptors. Expressed in skin.

Its subcellular location is the secreted. Its function is as follows. Plays an important role in the regulation of cell proliferation and cell differentiation. Required for normal regulation of the hair growth cycle. Functions as an inhibitor of hair elongation by promoting progression from anagen, the growth phase of the hair follicle, into catagen the apoptosis-induced regression phase. This chain is Fibroblast growth factor 5 (FGF5), found in Felis catus (Cat).